The following is a 490-amino-acid chain: Glutamyl-tRNA(Gln) amidotransferase subunit A (490 aa).

Residues K81 and S156 each act as charge relay system in the active site. The active-site Acyl-ester intermediate is S180.

It belongs to the amidase family. GatA subfamily. In terms of assembly, heterotrimer of A, B and C subunits.

The enzyme catalyses L-glutamyl-tRNA(Gln) + L-glutamine + ATP + H2O = L-glutaminyl-tRNA(Gln) + L-glutamate + ADP + phosphate + H(+). In terms of biological role, allows the formation of correctly charged Gln-tRNA(Gln) through the transamidation of misacylated Glu-tRNA(Gln) in organisms which lack glutaminyl-tRNA synthetase. The reaction takes place in the presence of glutamine and ATP through an activated gamma-phospho-Glu-tRNA(Gln). This is Glutamyl-tRNA(Gln) amidotransferase subunit A from Nocardia farcinica (strain IFM 10152).